A 511-amino-acid polypeptide reads, in one-letter code: uncharacterized protein (511 aa).

The region spanning 13-45 (IYDALNMLVYDYLLKMKYEGSAKIFFNEAGLEN) is the LisH domain. Positions 172-212 (PRFEEQGVPPAKMAPKQFRDEGRSGNVESPSIATNQEGSSP) are disordered. Residues 197 to 210 (NVESPSIATNQEGS) show a composition bias toward polar residues.

This is an uncharacterized protein from Encephalitozoon cuniculi (strain GB-M1) (Microsporidian parasite).